The chain runs to 228 residues: Probable septum site-determining protein MinC (228 aa).

Belongs to the MinC family. As to quaternary structure, interacts with MinD and FtsZ.

Its function is as follows. Cell division inhibitor that blocks the formation of polar Z ring septums. Rapidly oscillates between the poles of the cell to destabilize FtsZ filaments that have formed before they mature into polar Z rings. Prevents FtsZ polymerization. The protein is Probable septum site-determining protein MinC of Bacillus cereus (strain G9842).